The following is a 317-amino-acid chain: Ribosomal protein L11 methyltransferase (317 aa).

Residues threonine 158, glycine 179, aspartate 201, and asparagine 244 each coordinate S-adenosyl-L-methionine.

Belongs to the methyltransferase superfamily. PrmA family.

The protein resides in the cytoplasm. It catalyses the reaction L-lysyl-[protein] + 3 S-adenosyl-L-methionine = N(6),N(6),N(6)-trimethyl-L-lysyl-[protein] + 3 S-adenosyl-L-homocysteine + 3 H(+). Its function is as follows. Methylates ribosomal protein L11. This chain is Ribosomal protein L11 methyltransferase, found in Streptococcus pyogenes serotype M49 (strain NZ131).